A 160-amino-acid polypeptide reads, in one-letter code: Cytochrome b6-f complex subunit 4 (160 aa).

3 helical membrane-spanning segments follow: residues 36–56 (LLYIFPVVILGTIACVVGLAV), 95–115 (LLGIALQTLIPLGLMILPFIE), and 131–151 (SVFLFGTFLTIYLGIGACLPI).

The protein belongs to the cytochrome b family. PetD subfamily. As to quaternary structure, the 4 large subunits of the cytochrome b6-f complex are cytochrome b6, subunit IV (17 kDa polypeptide, PetD), cytochrome f and the Rieske protein, while the 4 small subunits are PetG, PetL, PetM and PetN. The complex functions as a dimer.

It localises to the cellular thylakoid membrane. In terms of biological role, component of the cytochrome b6-f complex, which mediates electron transfer between photosystem II (PSII) and photosystem I (PSI), cyclic electron flow around PSI, and state transitions. This is Cytochrome b6-f complex subunit 4 from Prochlorococcus marinus subsp. pastoris (strain CCMP1986 / NIES-2087 / MED4).